Reading from the N-terminus, the 307-residue chain is Type 2A encapsulin shell protein (307 aa).

Belongs to the encapsulin family. Family 2A subfamily. Homooligomeric. The encapsulin nanocompartment is formed by 60 subunits; monomers form pentamers which assemble to form shells. There are 12 charged pores where the pentamers meet as well as 3-fold axis channels and dimer channels. The N-terminus is blocked.

Its subcellular location is the encapsulin nanocompartment. It is found in the cytoplasm. The protein localises to the cytosol. It localises to the cell membrane. In terms of biological role, shell component of a type 2A encapsulin nanocompartment. Forms encapsulin nanocompartments about 24 nm in diameter from 60 monomers. Probably encapsulates at least cysteine desulfurase (CyD, AC O32975) and allows passage of cysteine into its interior, probably involved in sulfur metabolism. Expression in M.smegmatis generates a multimeric protein, whereas expression in E.coli does not. This is Type 2A encapsulin shell protein from Mycobacterium leprae (strain TN).